A 393-amino-acid chain; its full sequence is Aspartate aminotransferase (393 aa).

L-aspartate-binding residues include Gly-38, Trp-124, and Asn-174. At Lys-237 the chain carries N6-(pyridoxal phosphate)lysine.

It belongs to the class-I pyridoxal-phosphate-dependent aminotransferase family. As to quaternary structure, homodimer. It depends on pyridoxal 5'-phosphate as a cofactor.

The protein localises to the cytoplasm. The catalysed reaction is L-aspartate + 2-oxoglutarate = oxaloacetate + L-glutamate. This Bacillus subtilis (strain 168) protein is Aspartate aminotransferase (aspB).